The following is a 204-amino-acid chain: Putative AgrB-like protein (204 aa).

5 helical membrane passes run 52-74, 87-107, 111-131, 151-168, and 173-190; these read YGIALVTGLLLQTVTVHLSYLWL, LNCTLISLLMFVLAPFVFQNI, NWIVLGTFGFILLNMFLFAPA, AMIGTLILTGIALLIPFA, and LIMVGSLFQVISINPLTY.

This sequence belongs to the AgrB family.

The protein resides in the cell membrane. Functionally, may be involved in the proteolytic processing of a quorum sensing system signal molecule precursor. The polypeptide is Putative AgrB-like protein (Listeria monocytogenes serovar 1/2a (strain ATCC BAA-679 / EGD-e)).